The following is a 550-amino-acid chain: Methyl-coenzyme M reductase I subunit alpha (550 aa).

Glutamine 147 contributes to the coenzyme F430 binding site. Coenzyme B is bound by residues arginine 225, 256–257 (KH), and arginine 270. Histidine 257 carries the post-translational modification Pros-methylhistidine. 5-methylarginine is present on arginine 271. Position 333 (tyrosine 333) interacts with coenzyme M. A 2-methylglutamine modification is found at glutamine 400. Position 444 (tyrosine 444) interacts with coenzyme M. A 1-thioglycine modification is found at glycine 445. Aspartate 450 carries the (Z)-2,3-didehydroaspartate modification. Cysteine 452 bears the S-methylcysteine mark.

It belongs to the methyl-coenzyme M reductase alpha subunit family. MCR is a hexamer of two alpha, two beta, and two gamma chains, forming a dimer of heterotrimers. Coenzyme F430 serves as cofactor. In terms of processing, the alpha subunit contains six modified amino acids near the active site region. Is methylated on His-257, Arg-271, Gln-400 and Cys-452, probably by the action of specific S-adenosylmethionine-dependent methyltransferases. Also contains a thioglycine at position 445, forming a thiopeptide bond. Contains a didehydroaspartate residue at position 450. The methylation on C5 of Arg-271 is a post-translational methylation not essential in vivo, but which plays a role for the stability and structural integrity of MCR.

Its subcellular location is the cytoplasm. The enzyme catalyses coenzyme B + methyl-coenzyme M = methane + coenzyme M-coenzyme B heterodisulfide. It participates in one-carbon metabolism; methyl-coenzyme M reduction; methane from methyl-coenzyme M: step 1/1. Its activity is regulated as follows. Methyl-coenzyme M reductase activity is inhibited by 3-nitrooxypropanol (3-NOP) in vitro and in vivo, by oxidation of its active site Ni(I), which stops both growth and methanogenesis. Is also inhibited by the reaction product CoM-S-S-CoB. Its function is as follows. Component of the methyl-coenzyme M reductase (MCR) I that catalyzes the reductive cleavage of methyl-coenzyme M (CoM-S-CH3 or 2-(methylthio)ethanesulfonate) using coenzyme B (CoB or 7-mercaptoheptanoylthreonine phosphate) as reductant which results in the production of methane and the mixed heterodisulfide of CoB and CoM (CoM-S-S-CoB). This is the final step in methanogenesis. Neither N-6-mercaptohexanoylthreonine phosphate (H-S-HxoTP) nor N-8-mercaptooctanoylthreonine phosphate (H-SOcoTP) nor any other thiol compound such as CoA or CoM can substitute for CoB as the electron donor. The sequence is that of Methyl-coenzyme M reductase I subunit alpha (mcrA) from Methanothermobacter marburgensis (strain ATCC BAA-927 / DSM 2133 / JCM 14651 / NBRC 100331 / OCM 82 / Marburg) (Methanobacterium thermoautotrophicum).